The primary structure comprises 354 residues: Carbamoyl phosphate synthase small chain (354 aa).

The CPSase stretch occupies residues 1 to 167 (MEAVLILEDG…KEPKIHKTAN (167 aa)). L-glutamine contacts are provided by serine 45, glycine 219, and glycine 221. The Glutamine amidotransferase type-1 domain maps to 171–354 (RCVLIDCGVK…DEMIKLKDRK (184 aa)). Cysteine 246 (nucleophile) is an active-site residue. Residues leucine 247, glutamine 250, asparagine 288, glycine 290, and phenylalanine 291 each contribute to the L-glutamine site. Catalysis depends on residues histidine 330 and glutamate 332.

This sequence belongs to the CarA family. As to quaternary structure, composed of two chains; the small (or glutamine) chain promotes the hydrolysis of glutamine to ammonia, which is used by the large (or ammonia) chain to synthesize carbamoyl phosphate. Tetramer of heterodimers (alpha,beta)4.

It carries out the reaction hydrogencarbonate + L-glutamine + 2 ATP + H2O = carbamoyl phosphate + L-glutamate + 2 ADP + phosphate + 2 H(+). The enzyme catalyses L-glutamine + H2O = L-glutamate + NH4(+). It participates in amino-acid biosynthesis; L-arginine biosynthesis; carbamoyl phosphate from bicarbonate: step 1/1. It functions in the pathway pyrimidine metabolism; UMP biosynthesis via de novo pathway; (S)-dihydroorotate from bicarbonate: step 1/3. Its function is as follows. Small subunit of the glutamine-dependent carbamoyl phosphate synthetase (CPSase). CPSase catalyzes the formation of carbamoyl phosphate from the ammonia moiety of glutamine, carbonate, and phosphate donated by ATP, constituting the first step of 2 biosynthetic pathways, one leading to arginine and/or urea and the other to pyrimidine nucleotides. The small subunit (glutamine amidotransferase) binds and cleaves glutamine to supply the large subunit with the substrate ammonia. The chain is Carbamoyl phosphate synthase small chain from Methanocaldococcus jannaschii (strain ATCC 43067 / DSM 2661 / JAL-1 / JCM 10045 / NBRC 100440) (Methanococcus jannaschii).